The primary structure comprises 1216 residues: ATP-dependent helicase/nuclease subunit A (1216 aa).

Residues Q26 to S488 form the UvrD-like helicase ATP-binding domain. A47 to T54 provides a ligand contact to ATP. Residues K515 to G802 form the UvrD-like helicase C-terminal domain.

It belongs to the helicase family. AddA subfamily. Heterodimer of AddA and AddB/RexB. Mg(2+) serves as cofactor.

It catalyses the reaction Couples ATP hydrolysis with the unwinding of duplex DNA by translocating in the 3'-5' direction.. It carries out the reaction ATP + H2O = ADP + phosphate + H(+). Functionally, the heterodimer acts as both an ATP-dependent DNA helicase and an ATP-dependent, dual-direction single-stranded exonuclease. Recognizes the chi site generating a DNA molecule suitable for the initiation of homologous recombination. The AddA nuclease domain is required for chi fragment generation; this subunit has the helicase and 3' -&gt; 5' nuclease activities. This chain is ATP-dependent helicase/nuclease subunit A, found in Streptococcus pneumoniae (strain CGSP14).